Consider the following 199-residue polypeptide: Securin (199 aa).

2 disordered regions span residues M1 to G23 and R58 to Y108. An N-acetylalanine modification is found at A2. Residues V7 to G23 show a composition bias toward basic and acidic residues. Positions R58 to L61 match the D-box motif. Positions T68–K70 match the TEK-box 1 motif. Over residues K76–L85 the composition is skewed to polar residues. The TEK-box 2 motif lies at T91–K93. S162 is modified (phosphoserine). The short motif at P179–P192 is the SH3-binding element.

It belongs to the securin family. In terms of assembly, interacts with the caspase-like ESPL1, and prevents its protease activity by covering its active site. Interacts with p53/TP53 and blocks its activity probably by blocking its binding to DNA. Interacts with the Ku 70 kDa subunit of ds-DNA kinase. Interacts with PTTG1IP. Interacts with RPS10 and DNAJA1. In terms of processing, phosphorylated at Ser-162 by CDK1 during mitosis. Phosphorylated in vitro by ds-DNA kinase. Post-translationally, ubiquitinated through 'Lys-11' linkage of ubiquitin moieties by the anaphase promoting complex (APC) at the onset of anaphase, conducting to its degradation. 'Lys-11'-linked ubiquitination is mediated by the E2 ligase UBE2C/UBCH10. In terms of tissue distribution, expressed at low level in most tissues, except in adult testis, where it is highly expressed. Expressed in both spermatocytes and spermatids.

The protein resides in the cytoplasm. It localises to the nucleus. Regulatory protein, which plays a central role in chromosome stability, in the p53/TP53 pathway, and DNA repair. Probably acts by blocking the action of key proteins. During the mitosis, it blocks Separase/ESPL1 function, preventing the proteolysis of the cohesin complex and the subsequent segregation of the chromosomes. At the onset of anaphase, it is ubiquitinated, conducting to its destruction and to the liberation of ESPL1. Its function is however not limited to a blocking activity, since it is required to activate ESPL1. Negatively regulates the transcriptional activity and related apoptosis activity of p53/TP53. The negative regulation of p53/TP53 may explain the strong transforming capability of the protein when it is overexpressed. May also play a role in DNA repair via its interaction with Ku, possibly by connecting DNA damage-response pathways with sister chromatid separation. This chain is Securin (Pttg1), found in Rattus norvegicus (Rat).